Consider the following 219-residue polypeptide: Large ribosomal subunit protein uL29m (219 aa).

The disordered stretch occupies residues 77 to 97 (ASKYPLPKPVSPEKLEKREST). Over residues 87–97 (SPEKLEKREST) the composition is skewed to basic and acidic residues.

It belongs to the universal ribosomal protein uL29 family. Component of the mitochondrial large ribosomal subunit. Mature mitochondrial ribosomes consist of a small (37S) and a large (54S) subunit. The 37S subunit contains at least 33 different proteins and 1 molecule of RNA (15S). The 54S subunit contains at least 45 different proteins and 1 molecule of RNA (21S).

It localises to the mitochondrion. In Emericella nidulans (strain FGSC A4 / ATCC 38163 / CBS 112.46 / NRRL 194 / M139) (Aspergillus nidulans), this protein is Large ribosomal subunit protein uL29m (mrpl4).